The chain runs to 144 residues: Arsenate reductase ArsI1 (144 aa).

Residue cysteine 14 is the Nucleophile; cysteine thioarsenate intermediate of the active site.

This sequence belongs to the ArsC family.

The enzyme catalyses [glutaredoxin]-dithiol + arsenate + glutathione + H(+) = glutathionyl-S-S-[glutaredoxin] + arsenite + H2O. Catalyzes the reduction of arsenate [As(V)] to arsenite [As(III)]. Does not constitute the major arsenate reductase in cells: essential only in the absence of ArsC (AC P74313). The protein is Arsenate reductase ArsI1 of Synechocystis sp. (strain ATCC 27184 / PCC 6803 / Kazusa).